Reading from the N-terminus, the 507-residue chain is ATP synthase subunit alpha, chloroplastic (507 aa).

170–177 serves as a coordination point for ATP; the sequence is GDRQTGKT. 3 disordered regions span residues 278-325, 392-430, and 452-471; these read PRRP…TQAG, EPEASAQFASDPDKATRNQSARGQRSRELLKQSQPAPLP, and GQVQGSPAQSREYLVTNKPE. A compositionally biased stretch (basic and acidic residues) spans 282–303; sequence PGREAHPGDVPHLHPRPPERAA. Residues 305–322 are compositionally biased toward polar residues; it reads LSSQPGEGSTTASPTVET.

This sequence belongs to the ATPase alpha/beta chains family. In terms of assembly, F-type ATPases have 2 components, CF(1) - the catalytic core - and CF(0) - the membrane proton channel. CF(1) has five subunits: alpha(3), beta(3), gamma(1), delta(1), epsilon(1). CF(0) has four main subunits: a, b, b' and c.

The protein localises to the plastid. It is found in the chloroplast thylakoid membrane. The enzyme catalyses ATP + H2O + 4 H(+)(in) = ADP + phosphate + 5 H(+)(out). In terms of biological role, produces ATP from ADP in the presence of a proton gradient across the membrane. The alpha chain is a regulatory subunit. This is ATP synthase subunit alpha, chloroplastic from Selaginella uncinata (Blue spike-moss).